A 467-amino-acid polypeptide reads, in one-letter code: Cysteine--tRNA ligase (467 aa).

Residue Cys28 participates in Zn(2+) binding. Positions 30 to 40 (MTVYDHCHLGH) match the 'HIGH' region motif. The Zn(2+) site is built by Cys209, His234, and Glu238. The short motif at 266–270 (KMSKS) is the 'KMSKS' region element. Lys269 is an ATP binding site.

It belongs to the class-I aminoacyl-tRNA synthetase family. As to quaternary structure, monomer. Zn(2+) is required as a cofactor.

Its subcellular location is the cytoplasm. It carries out the reaction tRNA(Cys) + L-cysteine + ATP = L-cysteinyl-tRNA(Cys) + AMP + diphosphate. In Nitrosomonas eutropha (strain DSM 101675 / C91 / Nm57), this protein is Cysteine--tRNA ligase.